Reading from the N-terminus, the 1262-residue chain is SCL-interrupting locus protein homolog (1262 aa).

Residues 1–992 (MNTRFPSSKM…IDSPTKVKKN (992 aa)) form an interaction with RBM14 region. The interval 220 to 762 (YKHGYITMDE…VSMEAQSSPG (543 aa)) is interaction with CPAP. 3 disordered regions span residues 369–409 (RSSQ…QKIS), 454–551 (LCDA…LAPQ), and 650–670 (GGMG…AGPS). Polar residues-rich tracts occupy residues 473 to 493 (PTNQ…QSST), 500 to 512 (QFRN…SLSV), and 540 to 551 (TLDSRQPSLAPQ). The interval 567 to 760 (PMELQVPTPS…ELVSMEAQSS (194 aa)) is PIN1-binding. Ser-733 and Ser-760 each carry phosphoserine. 4 disordered regions span residues 782–804 (NAAG…ISSE), 883–904 (APTE…EPYR), 925–959 (NASQ…KRHN), and 1106–1129 (SSDN…HVLN). A compositionally biased stretch (basic and acidic residues) spans 792–803 (SQPKQDDTKISS). Positions 883-895 (APTEGASNSTELP) are enriched in polar residues. Over residues 949 to 959 (NTHHARKKRHN) the composition is skewed to basic residues. Ser-1110 carries the post-translational modification Phosphoserine. Residues 1116-1128 (PPSHADSESDHVL) are compositionally biased toward basic and acidic residues.

As to quaternary structure, homodimer. Interacts with PIN1 via its WW domain. This interaction is dependent on Stil mitotic phosphorylation. Interacts with CPAP. Interacts with RBM14 and this interaction interferes with the interaction of STIL with CPAP. Forms a complex with CPAP and SASS6. nteracts (via N-terminus) with CEP85; this interaction is essential for efficient centriolar targeting of STIL and subsequent PLK4 activation. Post-translationally, ubiquitinated. Phosphorylated following the activation of the mitotic checkpoint. In terms of tissue distribution, ubiquitously expressed in adult and fetal tissues. Highly expressed in hematopoietic tissues such as thymus, bone marrow and spleen.

Its subcellular location is the cytoplasm. The protein resides in the cytosol. It is found in the cytoskeleton. It localises to the microtubule organizing center. The protein localises to the centrosome. Its subcellular location is the centriole. The protein resides in the cell cortex. In terms of biological role, immediate-early gene. Plays an important role in embryonic development as well as in cellular growth and proliferation; its long-term silencing affects cell survival and cell cycle distribution as well as decreases CDK1 activity correlated with reduced phosphorylation of CDK1. Plays a role as a positive regulator of the sonic hedgehog pathway, acting downstream of PTCH1. Plays an important role in the regulation of centriole duplication. Required for the onset of procentriole formation and proper mitotic progression. During procentriole formation, is essential for the correct loading of SASS6 and CPAP to the base of the procentriole to initiate procentriole assembly. In complex with STIL acts as a modulator of PLK4-driven cytoskeletal rearrangements and directional cell motility. The protein is SCL-interrupting locus protein homolog (Stil) of Mus musculus (Mouse).